The sequence spans 582 residues: Poly(A) RNA polymerase, mitochondrial (582 aa).

A mitochondrion-targeting transit peptide spans 1-37 (MAVPGVGLLTRLNLCARRRTRVQRPIVRLLSCPGTVA). Position 90 is an N6-acetyllysine (lysine 90). Residues 107–109 (YES) and 241–242 (GC) each bind ATP. Residues aspartate 243 and aspartate 245 each coordinate Mg(2+). One can recognise a PAP-associated domain in the interval 437-483 (LELLLKEFFEYFGNFAFDKNSINIRQGREQNKPDSSPLYIQNPFETS).

It belongs to the DNA polymerase type-B-like family. As to quaternary structure, homodimer. Mg(2+) is required as a cofactor. The cofactor is Mn(2+). In terms of tissue distribution, ubiquitous, with stronger expression in tissues with high energy requirements: heart, brain, and skeletal muscle.

The protein resides in the cytoplasm. It localises to the mitochondrion. It carries out the reaction RNA(n) + ATP = RNA(n)-3'-adenine ribonucleotide + diphosphate. In terms of biological role, polymerase that creates the 3' poly(A) tail of mitochondrial transcripts. Can use all four nucleotides, but has higher activity with ATP and UTP (in vitro). Plays a role in replication-dependent histone mRNA degradation. May be involved in the terminal uridylation of mature histone mRNAs before their degradation is initiated. Might be responsible for the creation of some UAA stop codons which are not encoded in mtDNA. The sequence is that of Poly(A) RNA polymerase, mitochondrial (MTPAP) from Homo sapiens (Human).